We begin with the raw amino-acid sequence, 371 residues long: Chaperone protein DnaJ (371 aa).

In terms of domain architecture, J spans 5 to 70 (CYYEILNISK…SKRSRYDQFG (66 aa)). The CR-type zinc finger occupies 127–204 (GVEKEITIPR…CYGNGKVKKQ (78 aa)). Zn(2+)-binding residues include Cys140, Cys143, Cys156, Cys159, Cys178, Cys181, Cys192, and Cys195. CXXCXGXG motif repeat units follow at residues 140-147 (CDSCDGTG), 156-163 (CHACHGQG), 178-185 (CPVCNGTG), and 192-199 (CDACYGNG).

The protein belongs to the DnaJ family. In terms of assembly, homodimer. The cofactor is Zn(2+).

The protein resides in the cytoplasm. Participates actively in the response to hyperosmotic and heat shock by preventing the aggregation of stress-denatured proteins and by disaggregating proteins, also in an autonomous, DnaK-independent fashion. Unfolded proteins bind initially to DnaJ; upon interaction with the DnaJ-bound protein, DnaK hydrolyzes its bound ATP, resulting in the formation of a stable complex. GrpE releases ADP from DnaK; ATP binding to DnaK triggers the release of the substrate protein, thus completing the reaction cycle. Several rounds of ATP-dependent interactions between DnaJ, DnaK and GrpE are required for fully efficient folding. Also involved, together with DnaK and GrpE, in the DNA replication of plasmids through activation of initiation proteins. This Francisella tularensis subsp. holarctica (strain LVS) protein is Chaperone protein DnaJ.